Here is a 495-residue protein sequence, read N- to C-terminus: Glycogen synthase (495 aa).

Residue Lys-24 coordinates ADP-alpha-D-glucose.

This sequence belongs to the glycosyltransferase 1 family. Bacterial/plant glycogen synthase subfamily.

The enzyme catalyses [(1-&gt;4)-alpha-D-glucosyl](n) + ADP-alpha-D-glucose = [(1-&gt;4)-alpha-D-glucosyl](n+1) + ADP + H(+). It functions in the pathway glycan biosynthesis; glycogen biosynthesis. Functionally, synthesizes alpha-1,4-glucan chains using ADP-glucose. The protein is Glycogen synthase of Nitrosomonas europaea (strain ATCC 19718 / CIP 103999 / KCTC 2705 / NBRC 14298).